Consider the following 156-residue polypeptide: 2-C-methyl-D-erythritol 2,4-cyclodiphosphate synthase (156 aa).

A divalent metal cation is bound by residues Asp8 and His10. 4-CDP-2-C-methyl-D-erythritol 2-phosphate-binding positions include 8 to 10 (DVH) and 34 to 35 (HS). An a divalent metal cation-binding site is contributed by His42. 4-CDP-2-C-methyl-D-erythritol 2-phosphate is bound by residues 56–58 (DIG), 61–65 (FPDTD), 100–106 (AQRPKMA), 132–135 (TTEE), and Phe139.

Belongs to the IspF family. In terms of assembly, homotrimer. It depends on a divalent metal cation as a cofactor.

The enzyme catalyses 4-CDP-2-C-methyl-D-erythritol 2-phosphate = 2-C-methyl-D-erythritol 2,4-cyclic diphosphate + CMP. It functions in the pathway isoprenoid biosynthesis; isopentenyl diphosphate biosynthesis via DXP pathway; isopentenyl diphosphate from 1-deoxy-D-xylulose 5-phosphate: step 4/6. Involved in the biosynthesis of isopentenyl diphosphate (IPP) and dimethylallyl diphosphate (DMAPP), two major building blocks of isoprenoid compounds. Catalyzes the conversion of 4-diphosphocytidyl-2-C-methyl-D-erythritol 2-phosphate (CDP-ME2P) to 2-C-methyl-D-erythritol 2,4-cyclodiphosphate (ME-CPP) with a corresponding release of cytidine 5-monophosphate (CMP). The sequence is that of 2-C-methyl-D-erythritol 2,4-cyclodiphosphate synthase from Clostridium perfringens (strain ATCC 13124 / DSM 756 / JCM 1290 / NCIMB 6125 / NCTC 8237 / Type A).